We begin with the raw amino-acid sequence, 716 residues long: Amino-acid acetyltransferase, mitochondrial (716 aa).

A mitochondrion-targeting transit peptide spans 1 to 44 (MSPHTGWPRTVNSSLLKKHRSSLCTCQHTSSFLPRSFSTTADRH). Disordered stretches follow at residues 99-119 (YPKS…APTL) and 487-508 (LSSS…TVYP). A compositionally biased stretch (basic and acidic residues) spans 102–112 (SPDENKPEPEK). Over residues 497-508 (GPTNNGQGTVYP) the composition is skewed to polar residues. An N-acetyltransferase domain is found at 537-706 (SRPRLKLDDP…YEAVCRSTQP (170 aa)).

Belongs to the acetyltransferase family.

The protein localises to the mitochondrion. The catalysed reaction is L-glutamate + acetyl-CoA = N-acetyl-L-glutamate + CoA + H(+). It functions in the pathway amino-acid biosynthesis; L-arginine biosynthesis; N(2)-acetyl-L-ornithine from L-glutamate: step 1/4. In terms of biological role, N-acetylglutamate synthase involved in arginine biosynthesis. The chain is Amino-acid acetyltransferase, mitochondrial (arg2) from Neosartorya fischeri (strain ATCC 1020 / DSM 3700 / CBS 544.65 / FGSC A1164 / JCM 1740 / NRRL 181 / WB 181) (Aspergillus fischerianus).